Here is a 197-residue protein sequence, read N- to C-terminus: Putative RNA polymerase II subunit B1 CTD phosphatase rtr1 (197 aa).

Residues 60-139 (EARKYLRKSD…LSDEPLWIRE (80 aa)) form an RTR1-type zinc finger. Zn(2+) is bound by residues cysteine 83, cysteine 88, cysteine 115, and cysteine 119.

This sequence belongs to the RPAP2 family.

The protein localises to the cytoplasm. Its subcellular location is the nucleus. It carries out the reaction O-phospho-L-seryl-[protein] + H2O = L-seryl-[protein] + phosphate. The enzyme catalyses O-phospho-L-threonyl-[protein] + H2O = L-threonyl-[protein] + phosphate. Putative RNA polymerase II subunit B1 C-terminal domain (CTD) phosphatase involved in RNA polymerase II transcription regulation. The sequence is that of Putative RNA polymerase II subunit B1 CTD phosphatase rtr1 from Schizosaccharomyces pombe (strain 972 / ATCC 24843) (Fission yeast).